Consider the following 248-residue polypeptide: 3-deoxy-manno-octulosonate cytidylyltransferase (248 aa).

It belongs to the KdsB family.

Its subcellular location is the cytoplasm. It carries out the reaction 3-deoxy-alpha-D-manno-oct-2-ulosonate + CTP = CMP-3-deoxy-beta-D-manno-octulosonate + diphosphate. Its pathway is nucleotide-sugar biosynthesis; CMP-3-deoxy-D-manno-octulosonate biosynthesis; CMP-3-deoxy-D-manno-octulosonate from 3-deoxy-D-manno-octulosonate and CTP: step 1/1. The protein operates within bacterial outer membrane biogenesis; lipopolysaccharide biosynthesis. Its function is as follows. Activates KDO (a required 8-carbon sugar) for incorporation into bacterial lipopolysaccharide in Gram-negative bacteria. This chain is 3-deoxy-manno-octulosonate cytidylyltransferase, found in Citrobacter koseri (strain ATCC BAA-895 / CDC 4225-83 / SGSC4696).